The following is a 271-amino-acid chain: 5-deoxy-glucuronate isomerase (271 aa).

This sequence belongs to the isomerase IolB family.

The catalysed reaction is 5-deoxy-D-glucuronate = 5-dehydro-2-deoxy-D-gluconate. It participates in polyol metabolism; myo-inositol degradation into acetyl-CoA; acetyl-CoA from myo-inositol: step 4/7. Functionally, involved in the isomerization of 5-deoxy-glucuronate (5DG) to 5-dehydro-2-deoxy-D-gluconate (DKG or 2-deoxy-5-keto-D-gluconate). The sequence is that of 5-deoxy-glucuronate isomerase from Bacillus licheniformis (strain ATCC 14580 / DSM 13 / JCM 2505 / CCUG 7422 / NBRC 12200 / NCIMB 9375 / NCTC 10341 / NRRL NRS-1264 / Gibson 46).